The following is a 744-amino-acid chain: Collagen alpha-1(VIII) chain (744 aa).

A signal peptide spans 1-27 (MAVQPGPPQLLQVLLTISLGSIRLIQA). A nonhelical region (NC2) region spans residues 29–117 (AYYGIKPLPP…GKEIPLASLR (89 aa)). Basic and acidic residues predominate over residues 101 to 110 (KEAVPKKGKE). Disordered regions lie at residues 101 to 434 (KEAV…PGLQ) and 463 to 584 (EAGH…QGEY). Positions 118-571 (GEQGPRGEPG…PGPPGPPGPP (454 aa)) are triple-helical region. Pro residues predominate over residues 128–137 (PRGPPGPPGL). Residues 168–190 (KPGAMGMPGAKGEIGPKGEIGPM) show a composition bias toward low complexity. Over residues 203 to 217 (GLPGIGKPGGPGLPG) the composition is skewed to gly residues. Residues 288-298 (KPGPPGEPGPQ) are compositionally biased toward pro residues. Over residues 328-337 (GFPGGKGEQG) the composition is skewed to gly residues. A compositionally biased stretch (pro residues) spans 389 to 403 (PGEPGLPGIPGPMGP). A compositionally biased stretch (gly residues) spans 411–420 (GPKGEGGIVG). Composition is skewed to low complexity over residues 469 to 506 (LPGL…TGPS) and 540 to 556 (LHGP…QGQP). Pro residues predominate over residues 558 to 579 (LPGPPGPPGPPGPPAVMPPTPA). Residues 572 to 744 (AVMPPTPAPQ…SFSGYLLYPM (173 aa)) are nonhelical region (NC1). A C1q domain is found at 611 to 744 (PAYEMPAFTA…SFSGYLLYPM (134 aa)).

As to quaternary structure, homotrimers, or heterotrimers in association with alpha 2(VIII) type collagens. Four homotrimers can form a tetrahedron stabilized by central interacting C-terminal NC1 trimers. Post-translationally, prolines at the third position of the tripeptide repeating unit (G-X-Y) are hydroxylated in some or all of the chains.

The protein localises to the secreted. Its subcellular location is the extracellular space. It is found in the extracellular matrix. The protein resides in the basement membrane. Functionally, macromolecular component of the subendothelium. Major component of the Descemet's membrane (basement membrane) of corneal endothelial cells. Also a component of the endothelia of blood vessels. Necessary for migration and proliferation of vascular smooth muscle cells and thus, has a potential role in the maintenance of vessel wall integrity and structure, in particular in atherogenesis. The polypeptide is Collagen alpha-1(VIII) chain (COL8A1) (Gallus gallus (Chicken)).